Consider the following 1044-residue polypeptide: Diacylglycerol lipase-alpha (1044 aa).

Residues 1 to 22 are Cytoplasmic-facing; sequence MPGIVVFRRRWSVGSDDLVLPA. The helical transmembrane segment at 23 to 43 threads the bilayer; it reads IFLFLLHTTWFVILSVVLFGL. Residues 44-60 lie on the Extracellular side of the membrane; the sequence is VYNPHEACSLNLVDHGR. The chain crosses the membrane as a helical span at residues 61 to 81; the sequence is GYLGILLSCMIAEMAIIWLSM. The Cytoplasmic segment spans residues 82–101; it reads RGGILYTEPRDSMQYVLYVR. The helical transmembrane segment at 102-122 threads the bilayer; the sequence is LAILVIEFIYAIVGIVWLTQY. The Extracellular portion of the chain corresponds to 123-136; that stretch reads YTSCNDLTAKNVTL. Residue asparagine 133 is glycosylated (N-linked (GlcNAc...) asparagine). The helical transmembrane segment at 137–157 threads the bilayer; it reads GMVVCNWVVILSVCITVLCVF. Residues 158 to 1044 lie on the Cytoplasmic side of the membrane; it reads DPTGRTFVKL…KQDDLVISAR (887 aa). Catalysis depends on charge relay system residues serine 472 and aspartate 524. Phosphoserine occurs at positions 728, 730, 733, 744, 784, 786, 808, 810, 835, 849, and 954. The tract at residues 848–897 is disordered; the sequence is LSKHSQDTQPLEAALGSGGVTPERPPSATIEEEEAAGGSEGGGVAPRGEL. A disordered region spans residues 1013–1044; sequence QECLATDKIRTSTPTGHGASPTKQDDLVISAR. The residue at position 1025 (threonine 1025) is a Phosphothreonine.

The protein belongs to the AB hydrolase superfamily. Lipase family. In terms of assembly, interacts (via C-terminal) with CAMK2A; leading to the phosphorylation and inhibition of DAGLA enzymatic activity. Interacts (via PPXXF motif) with HOMER1 and HOMER2; this interaction is required for DAGLA membrane localization. Ca(2+) is required as a cofactor. In terms of processing, phosphorylated at Ser-784 and Ser-810 by CAMK2A; phosphorylation by CAMK2A inhibits diacylglycerol lipase activity. As to expression, highly expressed by principal cells in the hippocampus. In embryonic brains, it is present in axonal tracts, while in adults it localizes to dendritic fields, correlating with the developmental change in requirement for 2-AG synthesis from the pre- to the postsynaptic compartment. Concentrated in heads of dendritic spines throughout the hippocampal formation. Highly compartmentalized into a wide perisynaptic annulus around the postsynaptic density of axospinous contacts but not intrasynaptically (at protein level).

The protein resides in the cell membrane. The protein localises to the cell projection. It is found in the dendritic spine membrane. Its subcellular location is the postsynaptic density membrane. It localises to the early endosome membrane. The catalysed reaction is a 1,2-diacyl-sn-glycerol + H2O = a 2-acylglycerol + a fatty acid + H(+). The enzyme catalyses 1-octadecanoyl-2-(5Z,8Z,11Z,14Z-eicosatetraenoyl)-sn-glycerol + H2O = 2-(5Z,8Z,11Z,14Z-eicosatetraenoyl)-glycerol + octadecanoate + H(+). It carries out the reaction 1,2-di-(9Z-octadecenoyl)-sn-glycerol + H2O = 2-(9Z-octadecenoyl)-glycerol + (9Z)-octadecenoate + H(+). It catalyses the reaction 1-(9Z-octadecenoyl)-2-(5Z,8Z,11Z,14Z-eicosatetraenoyl)-sn-glycerol + H2O = 2-(5Z,8Z,11Z,14Z-eicosatetraenoyl)-glycerol + (9Z)-octadecenoate + H(+). The catalysed reaction is 1-(9Z-octadecenoyl)-2-octadecanoyl-sn-glycerol + H2O = 2-octadecanoylglycerol + (9Z)-octadecenoate + H(+). The enzyme catalyses 1-(9Z-octadecenoyl)-2-(9Z,12Z-octadecadienoyl)-sn-glycerol + H2O = 2-(9Z,12Z-octadecadienoyl)-glycerol + (9Z)-octadecenoate + H(+). It carries out the reaction 1-(9Z-octadecenoyl)-2-O-(5Z,8Z,11Z,14Z-eicosatetraenyl)-sn-glycerol + H2O = 2-O-(5Z,8Z,11Z,14Z)-eicosatetraenylglycerol + (9Z)-octadecenoate + H(+). Inhibited by 1,2,3-triazole urea covalent inhibitor KT172, DH376 and DO34. Inhibited by p-hydroxy-mercuri-benzoate and HgCl(2), but not to PMSF. Also inhibited by RHC80267. Diacylglycerol lipase activity is inhibited by the phosphorylation of Ser-784 and Ser-810 by CAMK2A. Serine hydrolase that hydrolyzes arachidonic acid-esterified diacylglycerols (DAGs) to produce the principal endocannabinoid (eCB), 2-arachidonoylglycerol (2-AG). Preferentially hydrolyzes sn-1 fatty acids from diacylglycerols (DAG) that contain arachidonic acid (AA) esterified at the sn-2 position to biosynthesize 2-AG. Has negligible activity against other lipids including monoacylglycerols and phospholipids. Plays a key role in regulating 2-AG signaling in the central nervous system (CNS). Controls the activity of 2-AG as a retrograde messenger at neuronal synapses. Supports axonal growth during development and adult neurogenesis. Plays a role for eCB signaling in the physiological regulation of anxiety and depressive behaviors. Also regulates neuroinflammatory responses in the brain, in particular, LPS-induced microglial activation. This Mus musculus (Mouse) protein is Diacylglycerol lipase-alpha (Dagla).